The primary structure comprises 419 residues: uncharacterized protein (419 aa).

This is an uncharacterized protein from Caenorhabditis elegans.